The chain runs to 252 residues: Trans-aconitate 2-methyltransferase (252 aa).

Belongs to the methyltransferase superfamily. Tam family.

Its subcellular location is the cytoplasm. The enzyme catalyses trans-aconitate + S-adenosyl-L-methionine = (E)-3-(methoxycarbonyl)pent-2-enedioate + S-adenosyl-L-homocysteine. Functionally, catalyzes the S-adenosylmethionine monomethyl esterification of trans-aconitate. This is Trans-aconitate 2-methyltransferase from Escherichia coli (strain SE11).